The sequence spans 403 residues: Cytochrome P450 monooxygenase ustC (403 aa).

The first 18 residues, 1–18, serve as a signal peptide directing secretion; it reads MSPFIFAVTLTFAILALG. 2 N-linked (GlcNAc...) asparagine glycosylation sites follow: Asn-52 and Asn-92. Residue Cys-318 participates in heme binding.

This sequence belongs to the cytochrome P450 family. Heme serves as cofactor.

It functions in the pathway mycotoxin biosynthesis. Its function is as follows. Cytochrome P450 monooxygenase; part of the gene cluster that mediates the biosynthesis of the secondary metabolite ustiloxin B, an antimitotic tetrapeptide. First, ustA is processed by the subtilisin-like endoprotease Kex2 that is outside the ustiloxin B gene cluster, at the C-terminal side of Arg-Lys, after transfer to Golgi apparatus through the endoplasmic reticulum (ER). Cleavage by KEX2 generates 16 peptides YAIG-I to YAIG-XVI. To process the precursor peptide further, at least two peptidases are necessary to cleave the N-terminal and C-terminal sides of the Tyr-Ala-Ile-Gly core peptide which serves as backbone for the synthesis of ustiloxin B, through cyclization and modification of the tyrosine with a non-protein coding amino acid, norvaline. One of the two peptidases must be the serine peptidase ustP; and the other pepdidase is probably ustH. Macrocyclization of the core peptide derived from ustA requires the tyrosinase ustQ, as well as the homologous oxidases ustYa and ustYb, and leads to the production of the first cyclization product N-desmethylustiloxin F. For the formation of N-desmethylustiloxin F, three oxidation steps are required, hydroxylation at the benzylic position, hydroxylation at either the aromatic ring of Tyr or beta-position of Ile, and oxidative cyclization. UstQ may catalyze the oxidation of a phenol moiety, whereas the ustYa and ustYb are most likely responsible for the remaining two-step oxidations. N-desmethylustiloxin F is then methylated by ustM to yield ustiloxin F which in turn substrate of the cytochrome P450 monooxygenase ustC which catalyzes the formation of S-deoxyustiloxin H. The flavoprotein monooxygenases ustF1 and ustF2 then participate in the modification of the side chain of S-deoxyustiloxin H, leading to the synthesis of an oxime intermediate, via ustiloxin H. Finally, carboxylative dehydration performed by the cysteine desulfurase-like protein ustD yields ustiloxin B. The sequence is that of Cytochrome P450 monooxygenase ustC from Aspergillus flavus (strain ATCC 200026 / FGSC A1120 / IAM 13836 / NRRL 3357 / JCM 12722 / SRRC 167).